Here is a 269-residue protein sequence, read N- to C-terminus: Ribonuclease HII (269 aa).

One can recognise an RNase H type-2 domain in the interval 79 to 269; it reads TYLAGADEVG…SFLKNILNTF (191 aa). Residues Asp85, Glu86, and Asp182 each contribute to the a divalent metal cation site.

It belongs to the RNase HII family. Requires Mn(2+) as cofactor. It depends on Mg(2+) as a cofactor.

The protein localises to the cytoplasm. The catalysed reaction is Endonucleolytic cleavage to 5'-phosphomonoester.. Endonuclease that specifically degrades the RNA of RNA-DNA hybrids. This Clostridium novyi (strain NT) protein is Ribonuclease HII.